A 420-amino-acid polypeptide reads, in one-letter code: UDP-N-acetylglucosamine 1-carboxyvinyltransferase (420 aa).

22–23 (KN) contacts phosphoenolpyruvate. R91 contributes to the UDP-N-acetyl-alpha-D-glucosamine binding site. The Proton donor role is filled by C115. 2-(S-cysteinyl)pyruvic acid O-phosphothioketal is present on C115. UDP-N-acetyl-alpha-D-glucosamine contacts are provided by residues 120–124 (RPVDL), 160–163 (KVSV), D305, and I327.

Belongs to the EPSP synthase family. MurA subfamily.

It localises to the cytoplasm. It carries out the reaction phosphoenolpyruvate + UDP-N-acetyl-alpha-D-glucosamine = UDP-N-acetyl-3-O-(1-carboxyvinyl)-alpha-D-glucosamine + phosphate. The protein operates within cell wall biogenesis; peptidoglycan biosynthesis. In terms of biological role, cell wall formation. Adds enolpyruvyl to UDP-N-acetylglucosamine. The sequence is that of UDP-N-acetylglucosamine 1-carboxyvinyltransferase from Pectobacterium carotovorum subsp. carotovorum (strain PC1).